A 2399-amino-acid chain; its full sequence is Protein DOP1A (2399 aa).

6 disordered regions span residues 556–598 (PSGQ…SSES), 619–660 (NGQG…GAAG), 1105–1124 (SDSGCSQSSAGDNFSYEVDP), 1166–1188 (SVTSELEIESLQTKSSDLDPGKE), 1234–1263 (SPCISGTAQTLNDSSVPSETKSRQRSHSSI), and 1279–1308 (ETIVKESGKQPGAKPKVKLARKKDEDKKKA). Low complexity-rich tracts occupy residues 629–647 (GSTSSETETASTVGSEETV) and 1105–1116 (SDSGCSQSSAGD). Composition is skewed to polar residues over residues 1166 to 1180 (SVTSELEIESLQTKS) and 1234 to 1252 (SPCISGTAQTLNDSSVPSE). At S1261 the chain carries Phosphoserine.

The protein belongs to the DOP1 family.

It is found in the golgi apparatus membrane. Its function is as follows. May be involved in protein traffic between late Golgi and early endosomes. The protein is Protein DOP1A (Dop1a) of Mus musculus (Mouse).